A 336-amino-acid polypeptide reads, in one-letter code: Fructose-1,6-bisphosphatase class 1 (336 aa).

Residues glutamate 90, aspartate 112, leucine 114, and aspartate 115 each contribute to the Mg(2+) site. Residues 115 to 118 (DGSS), asparagine 211, and lysine 277 each bind substrate. Glutamate 283 contacts Mg(2+).

It belongs to the FBPase class 1 family. In terms of assembly, homotetramer. Mg(2+) is required as a cofactor.

The protein resides in the cytoplasm. The enzyme catalyses beta-D-fructose 1,6-bisphosphate + H2O = beta-D-fructose 6-phosphate + phosphate. It functions in the pathway carbohydrate biosynthesis; gluconeogenesis. The protein is Fructose-1,6-bisphosphatase class 1 of Pseudomonas fluorescens (strain SBW25).